The chain runs to 361 residues: 3-galactosyl-N-acetylglucosaminide 4-alpha-L-fucosyltransferase FUT3 (361 aa).

At 1 to 15 (MDPLGAAKPQWPWRR) the chain is on the cytoplasmic side. The helical; Signal-anchor for type II membrane protein transmembrane segment at 16 to 34 (CLAALLFQLLVAVCFFSYL) threads the bilayer. Over 35–361 (RVSRDDATGS…TVRSIAAWFT (327 aa)) the chain is Lumenal. The segment at 39 to 58 (DDATGSPRAPSGSSRQDTTP) is disordered. N154 and N185 each carry an N-linked (GlcNAc...) asparagine glycan.

It belongs to the glycosyltransferase 10 family. Post-translationally, glycosylated. In terms of tissue distribution, highly expressed in stomach, colon, small intestine, lung and kidney and to a lesser extent in salivary gland, bladder, uterus and liver.

The protein resides in the golgi apparatus. It localises to the golgi stack membrane. It carries out the reaction a beta-D-galactosyl-(1-&gt;3)-N-acetyl-beta-D-glucosaminyl derivative + GDP-beta-L-fucose = a beta-D-galactosyl-(1-&gt;3)-[alpha-L-fucosyl-(1-&gt;4)]-N-acetyl-beta-D-glucosaminyl derivative + GDP + H(+). The catalysed reaction is an N-acetyl-alpha-neuraminyl-(2-&gt;3)-beta-D-galactosyl-(1-&gt;4)-N-acetyl-beta-D-glucosaminyl derivative + GDP-beta-L-fucose = an alpha-Neu5Ac-(2-&gt;3)-beta-D-Gal-(1-&gt;4)-[alpha-L-Fuc-(1-&gt;3)]-beta-D-GlcNAc derivative + GDP + H(+). The enzyme catalyses a beta-D-galactosyl-(1-&gt;4)-N-acetyl-beta-D-glucosaminyl derivative + GDP-beta-L-fucose = a beta-D-galactosyl-(1-&gt;4)-[alpha-L-fucosyl-(1-&gt;3)]-N-acetyl-beta-D-glucosaminyl derivative + GDP + H(+). It catalyses the reaction an alpha-Neu5Ac-(2-&gt;3)-beta-D-Gal-(1-&gt;4)-beta-D-GlcNAc-(1-&gt;3)-beta-D-Gal-(1-&gt;4)-[alpha-L-Fuc-(1-&gt;3)]-beta-D-GlcNAc derivative + GDP-beta-L-fucose = an alpha-Neu5Ac-(2-&gt;3)-beta-D-Gal-(1-&gt;4)-[alpha-L-Fuc-(1-&gt;3)]-beta-D-GlcNAc-(1-&gt;3)-beta-D-Gal-(1-&gt;4)-[alpha-L-Fuc-(1-&gt;3)]-beta-D-GlcNAc derivative + GDP + H(+). It carries out the reaction Lc4Cer + GDP-beta-L-fucose = a lactoside III(4)-a-Fuc-Lc4Cer + GDP + H(+). The catalysed reaction is a beta-D-Gal-(1-&gt;3)-beta-D-GlcNAc-(1-&gt;3)-beta-D-Gal-(1-&gt;4)-beta-D-Glc-(1&lt;-&gt;1')-Cer(d18:1(4E)) + GDP-beta-L-fucose = a III(4)-a-Fuc-Lc4Cer(d18:1(4E)) + GDP + H(+). The enzyme catalyses N-acetyl-alpha-neuraminosyl-(2-&gt;3)-beta-D-galactosyl-(1-&gt;3)-[N-acetyl-alpha-neuraminosyl-(2-&gt;6)]-N-acetyl-beta-D-glucosaminyl-(1-&gt;3)-beta-D-galactosyl-(1-&gt;4)-beta-D-glucosyl-(1&lt;-&gt;1')-N-acyl-sphing-4-enine + GDP-beta-L-fucose = N-acetyl-alpha-neuraminosyl-(2-&gt;3)-beta-D-galactosyl-(1-&gt;3)-alpha-L-fucosyl-(1-&gt;4)-[N-acetyl-alpha-neuraminosyl-(2-&gt;6)-N-acetyl-beta-D-glucosaminyl-(1-&gt;3)]-beta-D-galactosyl-(1-&gt;4)-beta-D-glucosyl-(1&lt;-&gt;1')-N-acyl-sphing-4-enine + GDP + H(+). It catalyses the reaction N-acetyl-alpha-neuraminosyl-(2-&gt;3)-beta-D-galactosyl-(1-&gt;3)-N-acetyl-beta-D-glucosaminyl-(1-&gt;3)-beta-D-galactosyl-(1-&gt;4)-beta-D-glucosyl-(1&lt;-&gt;1')-N-acyl-sphing-4-enine + GDP-beta-L-fucose = N-acetyl-alpha-neuraminosyl-(2-&gt;3)-beta-D-galactosyl-(1-&gt;3)-alpha-L-fucosyl-(1-&gt;4)-[N-acetyl-beta-D-glucosaminyl-(1-&gt;3)]-beta-D-galactosyl-(1-&gt;4)-beta-D-glucosyl-(1&lt;-&gt;1')-N-acyl-sphing-4-enine + GDP + H(+). It carries out the reaction beta-D-galactosyl-(1-&gt;3)-N-acetyl-D-glucosamine + GDP-beta-L-fucose = beta-D-galactosyl-(1-&gt;3)-[alpha-L-fucosyl-(1-&gt;4)]-N-acetyl-D-glucosamine + GDP + H(+). The catalysed reaction is alpha-L-Fuc-(1-&gt;2)-beta-D-Gal-(1-&gt;3)-D-GlcNAc + GDP-beta-L-fucose = alpha-L-Fuc-(1-&gt;2)-beta-D-Gal-(1-&gt;3)-[alpha-L-Fuc-(1-&gt;4)]-D-GlcNAc + GDP + H(+). The enzyme catalyses alpha-L-Fuc-(1-&gt;2)-beta-D-Gal-(1-&gt;4)-D-GlcNAc + GDP-beta-L-fucose = alpha-L-Fuc-(1-&gt;2)-beta-D-Gal-(1-&gt;4)-[alpha-L-Fuc-(1-&gt;3)]-D-GlcNAc + GDP + H(+). It catalyses the reaction beta-D-galactosyl-(1-&gt;4)-N-acetyl-D-glucosamine + GDP-beta-L-fucose = beta-D-galactosyl-(1-&gt;4)-[alpha-L-fucosyl-(1-&gt;3)]-N-acetyl-D-glucosamine + GDP + H(+). It carries out the reaction lactose + GDP-beta-L-fucose = beta-D-galactosyl-(1-&gt;4)-[alpha-L-fucosyl-(1-&gt;3)]-D-glucose + GDP + H(+). The catalysed reaction is an alpha-Neu5Ac-(2-&gt;3)-beta-D-Gal-(1-&gt;3)-D-GlcNAc derivative + GDP-beta-L-fucose = an alpha-Neu5Ac-(2-&gt;3)-beta-D-Gal-(1-&gt;3)-[alpha-L-Fuc-(1-&gt;4)]-beta-D-GlcNAc derivative + GDP + H(+). Its pathway is protein modification; protein glycosylation. Functionally, catalyzes the transfer of L-fucose, from a guanosine diphosphate-beta-L-fucose, to both the subterminal N-acetyl glucosamine (GlcNAc) of type 1 chain (beta-D-Gal-(1-&gt;3)-beta-D-GlcNAc) glycolipids and oligosaccharides via an alpha(1,4) linkage, and the subterminal glucose (Glc) or GlcNAc of type 2 chain (beta-D-Gal-(1-&gt;4)-beta-D-GlcNAc) oligosaccharides via an alpha(1,3) linkage, independently of the presence of terminal alpha-L-fucosyl-(1,2) moieties on the terminal galactose of these acceptors. Through its catalytic activity, participates in the synthesis of antigens of the Lewis blood group system, i.e. Lewis a (Le(a)), lewis b (Le(b)), Lewis x/SSEA-1 (Le(x)) and lewis y (Le(y)) antigens. Also catalyzes the transfer of L-fucose to subterminal GlcNAc of sialyl- and disialyl-lactotetraosylceramide to produce sialyl Lewis a (sLe(a)) and disialyl Lewis a via an alpha(1,4) linkage and therefore may regulate cell surface sLe(a) expression and consequently regulates adhesive properties to E-selectin, cell proliferation and migration. Catalyzes the transfer of an L-fucose to 3'-sialyl-N-acetyllactosamine by an alpha(1,3) linkage, which allows the formation of sialyl-Lewis x structure and therefore may regulate the sialyl-Lewis x surface antigen expression and consequently adhesive properties to E-selectin. Prefers type 1 chain over type 2 acceptors. Type 1 tetrasaccharide is a better acceptor than type 1 disaccharide suggesting that a beta anomeric configuration of GlcNAc in the substrate is preferred. Lewis-positive (Le(+)) individuals have an active enzyme while Lewis-negative (Le(-)) individuals have an inactive enzyme. The sequence is that of 3-galactosyl-N-acetylglucosaminide 4-alpha-L-fucosyltransferase FUT3 from Homo sapiens (Human).